The sequence spans 421 residues: Probable sugar-binding periplasmic protein (421 aa).

The first 27 residues, 1–27, serve as a signal peptide directing secretion; the sequence is MHKLLKLAAMGTAACALLAGMAPVANA.

It belongs to the bacterial solute-binding protein 1 family.

Its subcellular location is the periplasm. Part of a binding-protein-dependent transport system for a sugar. The protein is Probable sugar-binding periplasmic protein of Brucella suis biovar 1 (strain 1330).